The following is a 238-amino-acid chain: Uridylate kinase (238 aa).

Residue 12 to 15 (KLSG) participates in ATP binding. Residues 20 to 25 (GDEGFG) are involved in allosteric activation by GTP. Residue G54 coordinates UMP. ATP contacts are provided by G55 and R59. UMP contacts are provided by residues D74 and 135–142 (TGSPFFTT). The ATP site is built by T162, Y168, and D171.

Belongs to the UMP kinase family. As to quaternary structure, homohexamer.

It is found in the cytoplasm. It carries out the reaction UMP + ATP = UDP + ADP. It functions in the pathway pyrimidine metabolism; CTP biosynthesis via de novo pathway; UDP from UMP (UMPK route): step 1/1. With respect to regulation, allosterically activated by GTP. Inhibited by UTP. In terms of biological role, catalyzes the reversible phosphorylation of UMP to UDP. This Histophilus somni (strain 129Pt) (Haemophilus somnus) protein is Uridylate kinase.